The chain runs to 66 residues: Large ribosomal subunit protein bL33c (66 aa).

It belongs to the bacterial ribosomal protein bL33 family.

The protein resides in the plastid. Its subcellular location is the chloroplast. The protein is Large ribosomal subunit protein bL33c of Illicium oligandrum (Star anise).